Consider the following 315-residue polypeptide: 4-diphosphocytidyl-2-C-methyl-D-erythritol kinase (315 aa).

Lysine 26 is a catalytic residue. ATP is bound at residue 111 to 121 (PLAGGLAGGSA). Residue aspartate 153 is part of the active site.

It belongs to the GHMP kinase family. IspE subfamily.

The catalysed reaction is 4-CDP-2-C-methyl-D-erythritol + ATP = 4-CDP-2-C-methyl-D-erythritol 2-phosphate + ADP + H(+). Its pathway is isoprenoid biosynthesis; isopentenyl diphosphate biosynthesis via DXP pathway; isopentenyl diphosphate from 1-deoxy-D-xylulose 5-phosphate: step 3/6. Catalyzes the phosphorylation of the position 2 hydroxy group of 4-diphosphocytidyl-2C-methyl-D-erythritol. The polypeptide is 4-diphosphocytidyl-2-C-methyl-D-erythritol kinase (Salinispora arenicola (strain CNS-205)).